The primary structure comprises 256 residues: N-acetyl-D-glucosamine kinase (256 aa).

ATP-binding positions include 4-11 and 133-140; these read GFDMGGTK and GVGGGLIV. Zn(2+)-binding residues include His157, Cys177, Cys179, and Cys184.

Belongs to the ROK (NagC/XylR) family. NagK subfamily.

It catalyses the reaction N-acetyl-D-glucosamine + ATP = N-acetyl-D-glucosamine 6-phosphate + ADP + H(+). It participates in cell wall biogenesis; peptidoglycan recycling. In terms of biological role, catalyzes the phosphorylation of N-acetyl-D-glucosamine (GlcNAc) derived from cell-wall degradation, yielding GlcNAc-6-P. The sequence is that of N-acetyl-D-glucosamine kinase (nagK) from Yersinia pestis bv. Antiqua (strain Nepal516).